The primary structure comprises 252 residues: Triosephosphate isomerase (252 aa).

10 to 12 (NWK) is a binding site for substrate. Residue histidine 96 is the Electrophile of the active site. Glutamate 168 functions as the Proton acceptor in the catalytic mechanism. Residues glycine 174, serine 213, and 234 to 235 (GG) each bind substrate.

It belongs to the triosephosphate isomerase family. Homodimer.

The protein resides in the cytoplasm. The enzyme catalyses D-glyceraldehyde 3-phosphate = dihydroxyacetone phosphate. It participates in carbohydrate biosynthesis; gluconeogenesis. Its pathway is carbohydrate degradation; glycolysis; D-glyceraldehyde 3-phosphate from glycerone phosphate: step 1/1. Involved in the gluconeogenesis. Catalyzes stereospecifically the conversion of dihydroxyacetone phosphate (DHAP) to D-glyceraldehyde-3-phosphate (G3P). This Nitrosomonas eutropha (strain DSM 101675 / C91 / Nm57) protein is Triosephosphate isomerase.